The primary structure comprises 282 residues: Uridylate-specific endoribonuclease B (282 aa).

Residues 4–278 enclose the EndoU domain; that stretch reads GDRELSALIQ…IGTTYPVPVK (275 aa). Active-site residues include His-156, His-172, and Lys-218.

This sequence belongs to the ENDOU family. In terms of assembly, monomer. The cofactor is Mn(2+).

It carries out the reaction ribonucleotidyl-uridine-RNA = a 5'-end dephospho-uridine-RNA + a 3'-end 2',3'-cyclophospho-ribonucleotide-RNA. Its function is as follows. Endoribonuclease that cleaves single-stranded RNAs at 5' of uridylates and releases a product with a 2',3'-cyclic phosphate at the 3'-end. The UU and GU sites are more efficiently cleaved than CU and AU sites. This Danio rerio (Zebrafish) protein is Uridylate-specific endoribonuclease B (endoub).